A 133-amino-acid chain; its full sequence is MADAFVGTWKLVDSKNFDDYMKSLGVGFATRQVASMTKPTTIIEKNGDTITIKTHSTFKNTEISFQLGVEFDEVTADDRKVKSVVTLDGGKLVHVQKWDGQETTLTRELSDGKLILTLTHGNVVSTRTYEKEA.

Ala-2 is modified (N-acetylalanine). Thr-8 is modified (phosphothreonine). Position 20 is a phosphotyrosine; by Tyr-kinases (Tyr-20). Ser-23 bears the Phosphoserine mark. Thr-30 is modified (phosphothreonine). A Phosphoserine modification is found at Ser-83. Residue 127-129 (RTY) coordinates (9Z)-octadecenoate. 127 to 129 (RTY) is a hexadecanoate binding site. Residue 127–129 (RTY) participates in octadecanoate binding.

Heart, but also skeletal muscle, kidney, brain and mammary gland.

The protein resides in the cytoplasm. FABPs are thought to play a role in the intracellular transport of long-chain fatty acids and their acyl-CoA esters. The protein is Fatty acid-binding protein, heart (Fabp3) of Rattus norvegicus (Rat).